We begin with the raw amino-acid sequence, 550 residues long: Arginine--tRNA ligase (550 aa).

The 'HIGH' region motif lies at 130-140 (ANPTGPIHLGG).

This sequence belongs to the class-I aminoacyl-tRNA synthetase family. As to quaternary structure, monomer.

It is found in the cytoplasm. The catalysed reaction is tRNA(Arg) + L-arginine + ATP = L-arginyl-tRNA(Arg) + AMP + diphosphate. This chain is Arginine--tRNA ligase, found in Rhodococcus erythropolis (strain PR4 / NBRC 100887).